The sequence spans 127 residues: MARITAEDCNKIIPDRFRLVVLATRYAKLLNYKVETNQIKKEKRDKPPVIALRRIAAGKVSVAQLEQDLINSLRTRTMIEPLVNQDESEAVEEKFEYLPEVYIGEDYSDLDDQIFIDENGEDYETDK.

It belongs to the RNA polymerase subunit omega family. The RNAP catalytic core consists of 2 alpha, 1 beta, 1 beta' and 1 omega subunit. When a sigma factor is associated with the core the holoenzyme is formed, which can initiate transcription.

The catalysed reaction is RNA(n) + a ribonucleoside 5'-triphosphate = RNA(n+1) + diphosphate. Functionally, promotes RNA polymerase assembly. Latches the N- and C-terminal regions of the beta' subunit thereby facilitating its interaction with the beta and alpha subunits. The protein is DNA-directed RNA polymerase subunit omega of Rickettsia africae (strain ESF-5).